A 413-amino-acid chain; its full sequence is PAB1-binding protein 2 (413 aa).

Low complexity predominate over residues 1-23 (MSTETTKPSITTTPTTVLVSPNT). The tract at residues 1-36 (MSTETTKPSITTTPTTVLVSPNTLKRKKGEDTSEEQ) is disordered. KH domains lie at 66–130 (DVHL…YGMI), 148–213 (EISI…TFYI), and 330–394 (FVQQ…IMLI).

Interacts with PAB1.

Its subcellular location is the nucleus. In Saccharomyces cerevisiae (strain ATCC 204508 / S288c) (Baker's yeast), this protein is PAB1-binding protein 2 (PBP2).